Reading from the N-terminus, the 376-residue chain is MHLLKVGTWRNNTAFSWLIMFGVLWLVSQNCCRASVVWTAYMNISFHVGNHVLSELGETGVFGRSSTLKRVAGVIVPPEGKIQNACNPNTIFSRSKYSETWLALIERGGCTFTQKIKVAAEKGASGVIIYNFPGTGNQVFPMFHQAFEDVVVVMIGNLKGTEIFHLIKKGVLITAMVEVGRKHIIWMNHYLVSFVIVTTATLAYFIFYHIHRLCLARIQNRRWQRLTTDLQNAFGQLQLRVVKEGDEEINPNGDSCVICFEHYKPNDIVRILTCKHFFHKNCIDPWILSHGTCPICKCDILKVLGIQVDVENGTEPLQVLMSSELCETLSPSEEETNNEVSPAGTSDKVIHVEENPTSQNNDSQPHSVVEDVHPSP.

Residues 65–167 form the PA domain; it reads SSTLKRVAGV…LKGTEIFHLI (103 aa). A helical transmembrane segment spans residues 190–210; it reads YLVSFVIVTTATLAYFIFYHI. The RING-type; atypical zinc finger occupies 256–297; that stretch reads CVICFEHYKPNDIVRILTCKHFFHKNCIDPWILSHGTCPICK. The interval 328-376 is disordered; the sequence is TLSPSEEETNNEVSPAGTSDKVIHVEENPTSQNNDSQPHSVVEDVHPSP. Polar residues predominate over residues 355-366; sequence NPTSQNNDSQPH.

Interacts with E3 ligase UBE2J1. In terms of processing, auto-ubiquitinated.

The protein localises to the endoplasmic reticulum membrane. It carries out the reaction S-ubiquitinyl-[E2 ubiquitin-conjugating enzyme]-L-cysteine + [acceptor protein]-L-lysine = [E2 ubiquitin-conjugating enzyme]-L-cysteine + N(6)-ubiquitinyl-[acceptor protein]-L-lysine.. Its pathway is protein modification; protein ubiquitination. Has E3 ubiquitin-protein ligase activity. Plays a role in male fecundity through the interaction with the E2 ubituitin-protein ligase UBE2J1. This chain is E3 ubiquitin-protein ligase RNF133 (RNF133), found in Macaca fascicularis (Crab-eating macaque).